A 468-amino-acid chain; its full sequence is ATP synthase subunit beta 1 (468 aa).

151–158 (GGAGVGKT) contacts ATP.

It belongs to the ATPase alpha/beta chains family. F-type ATPases have 2 components, CF(1) - the catalytic core - and CF(0) - the membrane proton channel. CF(1) has five subunits: alpha(3), beta(3), gamma(1), delta(1), epsilon(1). CF(0) has three main subunits: a(1), b(2) and c(9-12). The alpha and beta chains form an alternating ring which encloses part of the gamma chain. CF(1) is attached to CF(0) by a central stalk formed by the gamma and epsilon chains, while a peripheral stalk is formed by the delta and b chains.

The protein resides in the cell inner membrane. It carries out the reaction ATP + H2O + 4 H(+)(in) = ADP + phosphate + 5 H(+)(out). Functionally, produces ATP from ADP in the presence of a proton gradient across the membrane. The catalytic sites are hosted primarily by the beta subunits. This is ATP synthase subunit beta 1 from Photobacterium profundum (strain SS9).